The following is a 341-amino-acid chain: Phosphoribosylformylglycinamidine cyclo-ligase (341 aa).

Belongs to the AIR synthase family.

The protein localises to the cytoplasm. The catalysed reaction is 2-formamido-N(1)-(5-O-phospho-beta-D-ribosyl)acetamidine + ATP = 5-amino-1-(5-phospho-beta-D-ribosyl)imidazole + ADP + phosphate + H(+). It participates in purine metabolism; IMP biosynthesis via de novo pathway; 5-amino-1-(5-phospho-D-ribosyl)imidazole from N(2)-formyl-N(1)-(5-phospho-D-ribosyl)glycinamide: step 2/2. This Synechocystis sp. (strain ATCC 27184 / PCC 6803 / Kazusa) protein is Phosphoribosylformylglycinamidine cyclo-ligase.